Reading from the N-terminus, the 466-residue chain is Ribulose bisphosphate carboxylase large chain (466 aa).

K5 bears the N6,N6,N6-trimethyllysine mark. Residues N114 and T164 each contribute to the substrate site. The Proton acceptor role is filled by K166. K168 contacts substrate. 3 residues coordinate Mg(2+): K192, D194, and E195. K192 bears the N6-carboxylysine mark. The active-site Proton acceptor is the H285. Substrate contacts are provided by R286, H318, and S370.

Belongs to the RuBisCO large chain family. Type I subfamily. Heterohexadecamer of 8 large chains and 8 small chains; disulfide-linked. The disulfide link is formed within the large subunit homodimers. The cofactor is Mg(2+). The disulfide bond which can form in the large chain dimeric partners within the hexadecamer appears to be associated with oxidative stress and protein turnover.

The protein localises to the plastid. Its subcellular location is the chloroplast. It catalyses the reaction 2 (2R)-3-phosphoglycerate + 2 H(+) = D-ribulose 1,5-bisphosphate + CO2 + H2O. The catalysed reaction is D-ribulose 1,5-bisphosphate + O2 = 2-phosphoglycolate + (2R)-3-phosphoglycerate + 2 H(+). Functionally, ruBisCO catalyzes two reactions: the carboxylation of D-ribulose 1,5-bisphosphate, the primary event in carbon dioxide fixation, as well as the oxidative fragmentation of the pentose substrate in the photorespiration process. Both reactions occur simultaneously and in competition at the same active site. This chain is Ribulose bisphosphate carboxylase large chain, found in Moringa oleifera (Horseradish tree).